Consider the following 246-residue polypeptide: tRNA (guanine-N(7)-)-methyltransferase (246 aa).

S-adenosyl-L-methionine-binding residues include Glu-77, Glu-102, Asp-129, and Asp-152. Asp-152 is an active-site residue. Substrate contacts are provided by residues Lys-156, Asp-188, and 225–228; that span reads TKFE.

It belongs to the class I-like SAM-binding methyltransferase superfamily. TrmB family.

It catalyses the reaction guanosine(46) in tRNA + S-adenosyl-L-methionine = N(7)-methylguanosine(46) in tRNA + S-adenosyl-L-homocysteine. It participates in tRNA modification; N(7)-methylguanine-tRNA biosynthesis. Functionally, catalyzes the formation of N(7)-methylguanine at position 46 (m7G46) in tRNA. This is tRNA (guanine-N(7)-)-methyltransferase from Haemophilus influenzae (strain PittEE).